The sequence spans 283 residues: Thymidylate synthase (283 aa).

DUMP contacts are provided by residues Arg-31 and 145–146 (RR). Cys-165 acts as the Nucleophile in catalysis. DUMP contacts are provided by residues 185 to 188 (RSAD), Asn-196, and 226 to 228 (HIY). Asp-188 is a binding site for (6R)-5,10-methylene-5,6,7,8-tetrahydrofolate. Residue Ser-282 participates in (6R)-5,10-methylene-5,6,7,8-tetrahydrofolate binding.

The protein belongs to the thymidylate synthase family. Bacterial-type ThyA subfamily. Homodimer.

Its subcellular location is the cytoplasm. It catalyses the reaction dUMP + (6R)-5,10-methylene-5,6,7,8-tetrahydrofolate = 7,8-dihydrofolate + dTMP. Its pathway is pyrimidine metabolism; dTTP biosynthesis. In terms of biological role, catalyzes the reductive methylation of 2'-deoxyuridine-5'-monophosphate (dUMP) to 2'-deoxythymidine-5'-monophosphate (dTMP) while utilizing 5,10-methylenetetrahydrofolate (mTHF) as the methyl donor and reductant in the reaction, yielding dihydrofolate (DHF) as a by-product. This enzymatic reaction provides an intracellular de novo source of dTMP, an essential precursor for DNA biosynthesis. The protein is Thymidylate synthase of Symbiobacterium thermophilum (strain DSM 24528 / JCM 14929 / IAM 14863 / T).